A 340-amino-acid polypeptide reads, in one-letter code: tRNA N6-adenosine threonylcarbamoyltransferase (340 aa).

Fe cation-binding residues include H111 and H115. Residues 134 to 138 (LVSGG), D167, G180, and N276 contribute to the substrate site. Position 304 (D304) interacts with Fe cation.

This sequence belongs to the KAE1 / TsaD family. The cofactor is Fe(2+).

The protein resides in the cytoplasm. It catalyses the reaction L-threonylcarbamoyladenylate + adenosine(37) in tRNA = N(6)-L-threonylcarbamoyladenosine(37) in tRNA + AMP + H(+). Required for the formation of a threonylcarbamoyl group on adenosine at position 37 (t(6)A37) in tRNAs that read codons beginning with adenine. Is involved in the transfer of the threonylcarbamoyl moiety of threonylcarbamoyl-AMP (TC-AMP) to the N6 group of A37, together with TsaE and TsaB. TsaD likely plays a direct catalytic role in this reaction. This Helicobacter pylori (strain J99 / ATCC 700824) (Campylobacter pylori J99) protein is tRNA N6-adenosine threonylcarbamoyltransferase.